The sequence spans 366 residues: Peptide chain release factor 1 (366 aa).

Glutamine 230 is subject to N5-methylglutamine. Basic and acidic residues-rich tracts occupy residues 283-293 (ARDAQEARDRA) and 315-328 (VTDHRLEGDSKNHP). Residues 283–335 (ARDAQEARDRAAQVGSGERSEKIRTYNYPQNRVTDHRLEGDSKNHPLDSVMAG) are disordered.

The protein belongs to the prokaryotic/mitochondrial release factor family. In terms of processing, methylated by PrmC. Methylation increases the termination efficiency of RF1.

The protein localises to the cytoplasm. Its function is as follows. Peptide chain release factor 1 directs the termination of translation in response to the peptide chain termination codons UAG and UAA. In Deinococcus deserti (strain DSM 17065 / CIP 109153 / LMG 22923 / VCD115), this protein is Peptide chain release factor 1.